The following is a 271-amino-acid chain: Very long chain fatty acid elongase 3 (271 aa).

Asparagine 6 carries an N-linked (GlcNAc...) asparagine glycan. Transmembrane regions (helical) follow at residues 30-50 (FLEE…LLIV), 67-87 (PLIL…LRMW), 116-136 (FWSF…AFII), 141-161 (PLIF…SFGY), 165-187 (VPSG…TYYT), 199-219 (LPMV…IFGI), and 236-256 (HFFW…HFFH).

The protein belongs to the ELO family. ELOVL3 subfamily. Interacts with TECR. N-Glycosylated. As to expression, expressed in brown adipose tissue and liver. In the skin, strong expressed in the cells of the inner layer of the outer root sheath of the hair follicles and in the sebocytes of the sebaceous glands. Hardly detectable in the epidermis and not at all in fibroblasts.

Its subcellular location is the endoplasmic reticulum membrane. It carries out the reaction a very-long-chain acyl-CoA + malonyl-CoA + H(+) = a very-long-chain 3-oxoacyl-CoA + CO2 + CoA. The catalysed reaction is eicosanoyl-CoA + malonyl-CoA + H(+) = 3-oxodocosanoyl-CoA + CO2 + CoA. The enzyme catalyses hexadecanoyl-CoA + malonyl-CoA + H(+) = 3-oxooctadecanoyl-CoA + CO2 + CoA. It catalyses the reaction octadecanoyl-CoA + malonyl-CoA + H(+) = 3-oxoeicosanoyl-CoA + CO2 + CoA. It carries out the reaction (9Z)-octadecenoyl-CoA + malonyl-CoA + H(+) = 3-oxo-(11Z)-eicosenoyl-CoA + CO2 + CoA. The catalysed reaction is (9Z,12Z)-octadecadienoyl-CoA + malonyl-CoA + H(+) = (11Z,14Z)-3-oxoicosa-11,14-dienoyl-CoA + CO2 + CoA. The enzyme catalyses (9Z,12Z,15Z)-octadecatrienoyl-CoA + malonyl-CoA + H(+) = (11Z,14Z,17Z)-3-oxoeicosatrienoyl-CoA + CO2 + CoA. It catalyses the reaction docosanoyl-CoA + malonyl-CoA + H(+) = 3-oxotetracosanoyl-CoA + CO2 + CoA. It carries out the reaction tetradecanoyl-CoA + malonyl-CoA + H(+) = 3-oxohexadecanoyl-CoA + CO2 + CoA. It participates in lipid metabolism; polyunsaturated fatty acid biosynthesis. Functionally, catalyzes the first and rate-limiting reaction of the four reactions that constitute the long-chain fatty acids elongation cycle. This endoplasmic reticulum-bound enzymatic process allows the addition of 2 carbons to the chain of long- and very long-chain fatty acids (VLCFAs) per cycle. Condensing enzyme that exhibits activity toward saturated and unsaturated acyl-CoA substrates with higher activity toward C18 acyl-CoAs, especially C18:0 acyl-CoAs. May participate in the production of saturated and monounsaturated VLCFAs of different chain lengths that are involved in multiple biological processes as precursors of membrane lipids and lipid mediators. Participates in the formation of certain VLCFA and triglycerides in certain cells of the hair follicles and the sebaceous glands, required for skin barrier function. Critical enzyme for lipid accumulation and metabolic activity in brown adipocytes during the early phase of the tissue recruitment. Plays a role in lipid storage and in resistance to diet-induced obesity. This Mus musculus (Mouse) protein is Very long chain fatty acid elongase 3.